A 301-amino-acid chain; its full sequence is Developmental pluripotency-associated protein 2 (301 aa).

A disordered region spans residues 31–85; that stretch reads KEEEEPNTDYATQSNVSSSTLDHTPPARSLVRHAGIKHPTRTIPSTCPPPSLPPI. Residues 39–52 are compositionally biased toward polar residues; sequence DYATQSNVSSSTLD. The segment covering 60-70 has biased composition (basic residues); sequence LVRHAGIKHPT. The SAP domain maps to 85-119; sequence IRDVSRNTLREWCRYHNLSTDGKKVEVYLRLRRHS.

In terms of assembly, interacts with DPPA4. As to expression, not detected in adult tissues.

The protein localises to the nucleus. Its function is as follows. Binds to target gene promoters, including NKX2-5 and SYCE1, but not GATA4, and may be involved in the maintenance of the active epigenetic status of these genes. The chain is Developmental pluripotency-associated protein 2 (Dppa2) from Mus musculus (Mouse).